Consider the following 690-residue polypeptide: MAKKKSEEHSGADANDSDYNEEPNFDDPPGYVDNISDEDLLGDMLAQRPSEADGVESVVVVDNMPKVEPSRLEKLKSVINKLFSQCGEIVNVVYPVDEEGKTKGYAFMEFKTASQAEDAVKKLNNHRLDKNYTFAVNLFTDFQKYENIPEKWEPPTVQPFKVQSDLYNFINDPDAYDQYCVAAETAPNCVQVGFWQNTLPEPNELETRERFTDTFVKWSPLGTYVVTFHKPGVAIWGGSSFQKIQKFPHPGTQFVEFSPCENYLVTYGPTPTGQKIIIWDIRTGAEKRSFVGDGMSVLSMFRWSHDDKFVARMGENSIHIYETPSFYLLDLKSIKIAGIRGFSWSPTDNVIAYWVEEQNQIPARVTLMEIPKKREIRNKNLFHVADCKLHWQKSGDYLCVKVDRYSKLKKDKKELDVKFLGMFYNFEIFHMREKEIPVDSVEIRELILAFAWEPIGNKFSIIHGEPNSANVSFYEVNKGVKPSLVKRLEKKSCTHLFWSPRGQFIVMANLTMGTFEFVDTTNDYIISASPDHFRASEVEWDPTGRYVVTGVSSWKVKEDTGFNMYTFQGRIIRRTILKNFVQFLWRPRPPTLLSEEKQKEIKKNLKKYYPIFEQKDRLRLTRASKELLEKRAQLRETFMEYRNKRIAEWKDQKSRRIMLRGHVDTDNLETDEVDEEVVEFLVKEEVTLLE.

The segment covering 1 to 11 (MAKKKSEEHSG) has biased composition (basic and acidic residues). The disordered stretch occupies residues 1–33 (MAKKKSEEHSGADANDSDYNEEPNFDDPPGYVD). Positions 15–25 (NDSDYNEEPNF) are enriched in acidic residues. The RRM domain occupies 57-141 (SVVVVDNMPK…YTFAVNLFTD (85 aa)). 5 WD repeats span residues 207-246 (TRER…KIQK), 292-331 (GDGM…LLDL), 334-369 (IKIA…TLME), 442-484 (EIRE…KPSL), and 530-575 (PDHF…IRRT). The stretch at 613–646 (EQKDRLRLTRASKELLEKRAQLRETFMEYRNKRI) forms a coiled coil.

This sequence belongs to the eIF-3 subunit B family. In terms of assembly, component of the eukaryotic translation initiation factor 3 (eIF-3) complex. The eIF-3 complex interacts with pix. Interacts with mxt.

The protein localises to the cytoplasm. In terms of biological role, RNA-binding component of the eukaryotic translation initiation factor 3 (eIF-3) complex, which is involved in protein synthesis of a specialized repertoire of mRNAs and, together with other initiation factors, stimulates binding of mRNA and methionyl-tRNAi to the 40S ribosome. The eIF-3 complex specifically targets and initiates translation of a subset of mRNAs involved in cell proliferation. The polypeptide is Eukaryotic translation initiation factor 3 subunit B (Drosophila mojavensis (Fruit fly)).